The primary structure comprises 931 residues: Transportin (931 aa).

HEAT repeat units lie at residues Gly-10–Asp-37, Val-42–Glu-79, Tyr-88–Phe-121, Leu-127–Asp-164, Asn-171–Ile-201, Phe-214–Val-241, Lys-253–Ala-280, Pro-296–Ile-421, Val-430–Ala-459, Ser-471–Arg-498, Leu-512–Ala-545, Leu-553–Val-586, Glu-594–Gly-632, Ser-640–Thr-693, Leu-704–Leu-735, Pro-743–Pro-776, Val-784–Pro-819, Asp-827–Asn-860, and Val-869–Met-900. Positions Ile-32 to Asp-99 constitute an Importin N-terminal domain. The interval Asp-317 to Glu-401 is disordered. The segment covering Asp-358–Asn-381 has biased composition (low complexity). Residues Asn-382–Glu-401 are compositionally biased toward acidic residues.

Belongs to the importin beta family. Importin beta-2 subfamily. Forms a complex with an importin alpha subunit.

The protein localises to the cytoplasm. It is found in the nucleus envelope. In terms of biological role, functions in nuclear protein import via a substrate-importin alpha-beta transport complex that passes though the nuclear pore complexes (NPC). Mediates docking of the substrate-importin complex to distinct nucleoporins. The chain is Transportin (tnpo) from Dictyostelium discoideum (Social amoeba).